The chain runs to 340 residues: Tetraacyldisaccharide 4'-kinase (340 aa).

Position 47 to 54 (47 to 54 (SVGGTGKT)) interacts with ATP.

This sequence belongs to the LpxK family.

It carries out the reaction a lipid A disaccharide + ATP = a lipid IVA + ADP + H(+). It functions in the pathway glycolipid biosynthesis; lipid IV(A) biosynthesis; lipid IV(A) from (3R)-3-hydroxytetradecanoyl-[acyl-carrier-protein] and UDP-N-acetyl-alpha-D-glucosamine: step 6/6. Functionally, transfers the gamma-phosphate of ATP to the 4'-position of a tetraacyldisaccharide 1-phosphate intermediate (termed DS-1-P) to form tetraacyldisaccharide 1,4'-bis-phosphate (lipid IVA). This is Tetraacyldisaccharide 4'-kinase from Flavobacterium johnsoniae (strain ATCC 17061 / DSM 2064 / JCM 8514 / BCRC 14874 / CCUG 350202 / NBRC 14942 / NCIMB 11054 / UW101) (Cytophaga johnsonae).